The primary structure comprises 656 residues: MTVRPTLRPKPGSIPTDPGVYRFRDEHGRVIYVGKAKNLRARLSSYFQDFSALHPRTQTMISTAADVDWTVVNTEVEALQLEYSWIKEYSPRFNVRYRDDKSYPYLAVTLNEEFPRVQVMRGARRRGVRYFGPYSYAWAIRDTVDLLLRVFPVRTCSAGVFKRARSSGRPCLLGYIDKCSAPCVGRIGVEEYRALAEDFCAFMAGETGRFLRQLEAEMKQAAAAQEYERAARIRDDIQALRTVMEKQAVVLGDSTDCDVIAIAEDQLEAAVQVFYVRGGRIRGERGWVVDKVEDVSTGKLVEQFLAQTYGGADDEESTTAIPREVLVSAEPADRDAVVAWLSKRRGAAVDVRVPQRGDKRALMETVLKNAEQTLARHKSQRASDLTTRSKALAEIAEALGLAEAPLRIECFDISTLQGEHTVASMVVFEDGLARKSEYRRFSIRGAEGADSDVAAMYEVISRRFTRYLEESQRVGELDTLGESGAPQGAERKAPRFAYPPNLVVVDGGRPQVAAAQRALDDLGIEDVAVCGLAKRLEEVWLPGEEDPIILPRTSEGLYLLQRVRDEAHRFAISYHRRKRAKALTASVLDDIPGLGPVRRAALLKHFGSVRRLAQATAAEIAEVPGIGERTAQTIYERLTSVEGGQRTQPENSKADE.

The region spanning 16-95 (TDPGVYRFRD…IKEYSPRFNV (80 aa)) is the GIY-YIG domain. The UVR domain maps to 208–243 (GRFLRQLEAEMKQAAAAQEYERAARIRDDIQALRTV).

It belongs to the UvrC family. As to quaternary structure, interacts with UvrB in an incision complex.

The protein resides in the cytoplasm. The UvrABC repair system catalyzes the recognition and processing of DNA lesions. UvrC both incises the 5' and 3' sides of the lesion. The N-terminal half is responsible for the 3' incision and the C-terminal half is responsible for the 5' incision. This is UvrABC system protein C from Thermobifida fusca (strain YX).